The chain runs to 293 residues: Protein translocase subunit SecF (293 aa).

The next 6 helical transmembrane spans lie at 10–30, 130–150, 158–178, 185–205, 244–264, and 267–287; these read ARIF…SMFA, VKSA…YITI, LAAI…FSVL, SFVA…IVVF, LFAV…FSFA, and VGFC…WLFF.

It belongs to the SecD/SecF family. SecF subfamily. As to quaternary structure, forms a complex with SecD. Part of the essential Sec protein translocation apparatus which comprises SecA, SecYEG and auxiliary proteins SecDF. Other proteins may also be involved.

The protein resides in the cell membrane. In terms of biological role, part of the Sec protein translocase complex. Interacts with the SecYEG preprotein conducting channel. SecDF uses the proton motive force (PMF) to complete protein translocation after the ATP-dependent function of SecA. In Acidaminococcus fermentans (strain ATCC 25085 / DSM 20731 / CCUG 9996 / CIP 106432 / VR4), this protein is Protein translocase subunit SecF.